The chain runs to 211 residues: Ribosomal RNA small subunit methyltransferase G (211 aa).

S-adenosyl-L-methionine is bound by residues Gly75, Leu80, 130–131 (VE), and Arg145.

The protein belongs to the methyltransferase superfamily. RNA methyltransferase RsmG family.

The protein resides in the cytoplasm. It catalyses the reaction guanosine(527) in 16S rRNA + S-adenosyl-L-methionine = N(7)-methylguanosine(527) in 16S rRNA + S-adenosyl-L-homocysteine. Its function is as follows. Specifically methylates the N7 position of guanine in position 527 of 16S rRNA. The sequence is that of Ribosomal RNA small subunit methyltransferase G from Aromatoleum aromaticum (strain DSM 19018 / LMG 30748 / EbN1) (Azoarcus sp. (strain EbN1)).